The following is a 798-amino-acid chain: Phenylalanine--tRNA ligase beta subunit (798 aa).

A tRNA-binding domain is found at 39–148 (NPIFDGFLVG…EDIPIGKKIN (110 aa)). The B5 domain maps to 402-477 (SCSNKIKLYH…RIYNYNNIPL (76 aa)). D455, D461, and D465 together coordinate Mg(2+). The region spanning 704–797 (SKYPTSRRDI…LKKKFQVVLR (94 aa)) is the FDX-ACB domain.

The protein belongs to the phenylalanyl-tRNA synthetase beta subunit family. Type 1 subfamily. As to quaternary structure, tetramer of two alpha and two beta subunits. Mg(2+) serves as cofactor.

It is found in the cytoplasm. It catalyses the reaction tRNA(Phe) + L-phenylalanine + ATP = L-phenylalanyl-tRNA(Phe) + AMP + diphosphate + H(+). The polypeptide is Phenylalanine--tRNA ligase beta subunit (pheT) (Buchnera aphidicola subsp. Schizaphis graminum (strain Sg)).